The following is a 393-amino-acid chain: CCCH-type zinc finger protein oma-2 (393 aa).

Residues 1 to 26 (MDMLKENVIQNNEARTESSVEPSHPD) form a disordered region. The span at 14–26 (ARTESSVEPSHPD) shows a compositional bias: basic and acidic residues. C3H1-type zinc fingers lie at residues 105 to 133 (SYKT…HGEE) and 147 to 175 (KYRT…HPDN). Disordered regions lie at residues 227 to 251 (TPDE…RYEL) and 311 to 340 (KQST…LTAA). Residues 313–340 (STPGGVSGYSSSGSTPSQDSDSSPLTAA) show a composition bias toward low complexity. Phosphothreonine; by GSK3 is present on T327.

Exclusively expressed in the hermaphrodite gonad. Expression only in cellulized oocytes. Widely distributed throughout gonadal oocytes from the mitotic stage to the developing diakinesis stage.

Its subcellular location is the cytoplasm. The protein resides in the cytoplasmic granule. It localises to the cytoskeleton. It is found in the microtubule organizing center. The protein localises to the centrosome. Zinc-finger RNA-binding protein that binds to 5'-UA[AU]-3' motifs in the 3'-UTR of maternal mRNAs to suppress translation in oocytes and embryos. Acts redundantly with oma-1 to control the temporal expression and distribution of maternal proteins and thereby promote meiotic progression, oocyte maturation, fertilization and embryonic development. Also, together with oma-1, is involved in P-granule distribution during embryonic development. The protein is CCCH-type zinc finger protein oma-2 of Caenorhabditis elegans.